The chain runs to 686 residues: Glycine--tRNA ligase beta subunit (686 aa).

The protein belongs to the class-II aminoacyl-tRNA synthetase family. As to quaternary structure, tetramer of two alpha and two beta subunits.

The protein localises to the cytoplasm. It carries out the reaction tRNA(Gly) + glycine + ATP = glycyl-tRNA(Gly) + AMP + diphosphate. The chain is Glycine--tRNA ligase beta subunit from Halothermothrix orenii (strain H 168 / OCM 544 / DSM 9562).